We begin with the raw amino-acid sequence, 62 residues long: Cytotoxin-like basic protein (62 aa).

Cystine bridges form between Cys3–Cys22, Cys15–Cys40, Cys44–Cys55, and Cys56–Cys61.

This sequence belongs to the three-finger toxin family. Short-chain subfamily. Orphan group XV sub-subfamily. In terms of tissue distribution, expressed by the venom gland.

The protein resides in the secreted. It is found in the target cell membrane. Has low cytotoxic activity. The protein is Cytotoxin-like basic protein of Naja naja (Indian cobra).